The chain runs to 395 residues: Pyridinium-3,5-bisthiocarboxylic acid mononucleotide nickel insertion protein (395 aa).

The protein belongs to the LarC family.

It catalyses the reaction Ni(II)-pyridinium-3,5-bisthiocarboxylate mononucleotide = pyridinium-3,5-bisthiocarboxylate mononucleotide + Ni(2+). Functionally, involved in the biosynthesis of a nickel-pincer cofactor ((SCS)Ni(II) pincer complex). Binds Ni(2+), and functions in nickel delivery to pyridinium-3,5-bisthiocarboxylic acid mononucleotide (P2TMN), to form the mature cofactor. Is thus probably required for the activation of nickel-pincer cofactor-dependent enzymes. This chain is Pyridinium-3,5-bisthiocarboxylic acid mononucleotide nickel insertion protein, found in Staphylococcus epidermidis (strain ATCC 12228 / FDA PCI 1200).